Reading from the N-terminus, the 971-residue chain is uncharacterized protein (971 aa).

The signal sequence occupies residues 1-24 (MQSNLLKVLGVLAIVATLVCFIFA). The segment at 127 to 146 (RTRPGKSNLDDSNQMIPIPR) is disordered. The next 6 membrane-spanning stretches (helical) occupy residues 611–631 (IKAILILYVMTYGAMFLLGFA), 721–741 (LGLSGIIYFIITFIAVCIVII), 753–773 (AFMATCILIGIAPLFISFLLF), 795–815 (VVMMAGIIVLTQLFTIYLDFV), 832–852 (FIGTILPIALLNVPIFCINWF), and 865–885 (GVNMQNIVALVIIAYGMYGYV). Residues 933-944 (TSRAKSRLKQRN) are compositionally biased toward basic residues. The tract at residues 933 to 971 (TSRAKSRLKQRNRTLEHAEQNSKKYMKKIGENTNEGTLK) is disordered. The segment covering 945-954 (RTLEHAEQNS) has biased composition (basic and acidic residues).

It belongs to the TrbL/VirB6 family.

It is found in the cell membrane. This is an uncharacterized protein from Rickettsia typhi (strain ATCC VR-144 / Wilmington).